The chain runs to 187 residues: uncharacterized protein (187 aa).

A run of 4 helical transmembrane segments spans residues 29-50 (IFIDIFIGVWAFILAVVWVYWI), 70-92 (FVIGYFLTFVIVAWLTSAAINAY), 128-147 (IFFALTFFSIGVISDFSVLR), and 154-176 (LALVYFVCLFGFIIWIGLAISYL).

The protein resides in the cell membrane. This is an uncharacterized protein from Archaeoglobus fulgidus (strain ATCC 49558 / DSM 4304 / JCM 9628 / NBRC 100126 / VC-16).